The chain runs to 291 residues: Homeobox protein knotted-1-like 7 (291 aa).

The 21-residue stretch at 194 to 214 (ELKLELKQGFKSRIEDVREEI) folds into the ELK domain. The homeobox; TALE-type DNA-binding region spans 215–278 (MRKRRAGKLP…NQRKRNWHNN (64 aa)).

It belongs to the TALE/KNOX homeobox family. As to quaternary structure, may form heterodimeric complex with the TALE/BELL proteins. Interacts with OFP1, OFP2, OFP3, OFP4 and OFP6.

Its subcellular location is the nucleus. May be involved in secondary cell wall biosynthesis. The protein is Homeobox protein knotted-1-like 7 (KNAT7) of Arabidopsis thaliana (Mouse-ear cress).